We begin with the raw amino-acid sequence, 546 residues long: Chaperonin GroEL 1 (546 aa).

Residues 30 to 33, K51, 87 to 91, G415, 479 to 481, and D495 each bind ATP; these read TLGP, DGTTT, and NAA.

Belongs to the chaperonin (HSP60) family. Forms a cylinder of 14 subunits composed of two heptameric rings stacked back-to-back. Interacts with the co-chaperonin GroES.

It localises to the cytoplasm. It carries out the reaction ATP + H2O + a folded polypeptide = ADP + phosphate + an unfolded polypeptide.. Together with its co-chaperonin GroES, plays an essential role in assisting protein folding. The GroEL-GroES system forms a nano-cage that allows encapsulation of the non-native substrate proteins and provides a physical environment optimized to promote and accelerate protein folding. The polypeptide is Chaperonin GroEL 1 (Paraburkholderia xenovorans (strain LB400)).